The chain runs to 95 residues: Opiscorpine-2 (95 aa).

A signal peptide spans 1–19 (MNNKLTALIFHGLLAIASC). Residues 55–95 (EFMCMANMDPTGSCETHCQKASGEKGYCHGTKCKCGVPLSY) form the BetaSPN-type CS-alpha/beta domain. Disulfide bonds link Cys58/Cys82, Cys68/Cys87, and Cys72/Cys89.

Belongs to the long chain scorpion toxin family. Class 3 subfamily. As to expression, expressed by the venom gland.

It localises to the secreted. Functionally, has antimicrobial activity against yeasts and bacteria. The chain is Opiscorpine-2 from Opistophthalmus carinatus (African yellow leg scorpion).